Here is a 101-residue protein sequence, read N- to C-terminus: Transcription factor ILI2 (101 aa).

Positions 1 to 22 are disordered; sequence MSSSRRSRTSSRLAAAPPPTDE. In terms of domain architecture, bHLH spans 8 to 63; that stretch reads RTSSRLAAAPPPTDEQMAELISKLQAVLPTRGGEANAKQASSAEVLQEACRYIRRL.

Belongs to the bHLH protein family.

Atypical and probable non DNA-binding bHLH transcription factor that integrates multiple signaling pathways to regulate cell elongation and plant development. This Oryza sativa subsp. indica (Rice) protein is Transcription factor ILI2 (ILI2).